The following is a 445-amino-acid chain: KIN17-like protein (445 aa).

The C2H2-type zinc-finger motif lies at 26 to 50 (WYCQLCEKQCRDENGFKCHISSESH). 2 stretches are compositionally biased toward low complexity: residues 215 to 229 (NTTT…TTTN) and 239 to 253 (NDNN…DQTN). Positions 215-256 (NTTTTTTNTTTTTTNKNIFDKLKTNDNNSSNNNYNDQTNPKP) are disordered.

It belongs to the KIN17 family.

The polypeptide is KIN17-like protein (Dictyostelium discoideum (Social amoeba)).